A 259-amino-acid polypeptide reads, in one-letter code: Global transcriptional regulator CodY (259 aa).

Positions 1–155 (MDLLTRTRKI…GATVVGMEIL (155 aa)) are GAF domain. Positions 203 to 222 (ASKIADRVGITRSVIVNALR) form a DNA-binding region, H-T-H motif. Residue S215 is modified to Phosphoserine.

It belongs to the CodY family.

It localises to the cytoplasm. Functionally, DNA-binding global transcriptional regulator which is involved in the adaptive response to starvation and acts by directly or indirectly controlling the expression of numerous genes in response to nutrient availability. During rapid exponential growth, CodY is highly active and represses genes whose products allow adaptation to nutrient depletion. In Shouchella clausii (strain KSM-K16) (Alkalihalobacillus clausii), this protein is Global transcriptional regulator CodY.